A 126-amino-acid chain; its full sequence is Large ribosomal subunit protein uL24 (126 aa).

The interval 1–23 (MKFSRDVTSSRRKQRKAHFGAPS) is disordered.

The protein belongs to the universal ribosomal protein uL24 family. As to quaternary structure, component of the large ribosomal subunit (LSU). Mature yeast ribosomes consist of a small (40S) and a large (60S) subunit. The 40S small subunit contains 1 molecule of ribosomal RNA (18S rRNA) and at least 33 different proteins. The large 60S subunit contains 3 rRNA molecules (25S, 5.8S and 5S rRNA) and at least 46 different proteins.

It is found in the cytoplasm. Its subcellular location is the nucleus. The protein resides in the nucleolus. Component of the ribosome, a large ribonucleoprotein complex responsible for the synthesis of proteins in the cell. The small ribosomal subunit (SSU) binds messenger RNAs (mRNAs) and translates the encoded message by selecting cognate aminoacyl-transfer RNA (tRNA) molecules. The large subunit (LSU) contains the ribosomal catalytic site termed the peptidyl transferase center (PTC), which catalyzes the formation of peptide bonds, thereby polymerizing the amino acids delivered by tRNAs into a polypeptide chain. The nascent polypeptides leave the ribosome through a tunnel in the LSU and interact with protein factors that function in enzymatic processing, targeting, and the membrane insertion of nascent chains at the exit of the ribosomal tunnel. In Schizosaccharomyces pombe (strain 972 / ATCC 24843) (Fission yeast), this protein is Large ribosomal subunit protein uL24 (rpl26).